A 649-amino-acid chain; its full sequence is Acetyl-coenzyme A synthetase (649 aa).

CoA is bound by residues 191-194 (RGGR), Thr-311, and Asn-335. ATP-binding positions include 387-389 (GEP), 411-416 (DTWWQT), Asp-500, and Arg-515. Ser-523 contacts CoA. Residue Arg-526 participates in ATP binding. Mg(2+)-binding residues include Val-537, Phe-539, and Ile-542. Arg-584 serves as a coordination point for CoA. At Lys-609 the chain carries N6-acetyllysine.

Belongs to the ATP-dependent AMP-binding enzyme family. The cofactor is Mg(2+). In terms of processing, acetylated. Deacetylation by the SIR2-homolog deacetylase activates the enzyme.

The enzyme catalyses acetate + ATP + CoA = acetyl-CoA + AMP + diphosphate. Its function is as follows. Catalyzes the conversion of acetate into acetyl-CoA (AcCoA), an essential intermediate at the junction of anabolic and catabolic pathways. AcsA undergoes a two-step reaction. In the first half reaction, AcsA combines acetate with ATP to form acetyl-adenylate (AcAMP) intermediate. In the second half reaction, it can then transfer the acetyl group from AcAMP to the sulfhydryl group of CoA, forming the product AcCoA. This is Acetyl-coenzyme A synthetase from Vibrio cholerae serotype O1 (strain ATCC 39315 / El Tor Inaba N16961).